The primary structure comprises 537 residues: Extracellular exo-inulinase inuE (537 aa).

A signal peptide spans 1 to 19 (MARLLKAVTVCALAGIAHA). Residue D41 is part of the active site. N-linked (GlcNAc...) asparagine glycosylation is found at N49, N67, N112, N300, N363, N398, N430, and N531.

The protein belongs to the glycosyl hydrolase 32 family.

The protein localises to the secreted. It carries out the reaction Hydrolysis of terminal, non-reducing (2-&gt;1)- and (2-&gt;6)-linked beta-D-fructofuranose residues in fructans.. Its activity is regulated as follows. The catalytic activity is increased by manganese cathions, but strongly inhibited by other metal ions such as copper, aluminum, silver, iron, nickel, zinc and magnesium cathions. Exo-inulinase involved in utilization of the plant storage polymer inulin, consisting of fructooligosaccharides with a degree of polymerization (DP) value from 2 to 60. Splits off terminal fructose units successively from the non-reducing end of the inulin molecule, and also hydrolyze sucrose and raffinose. The polypeptide is Extracellular exo-inulinase inuE (exoI) (Aspergillus ficuum).